The chain runs to 211 residues: Mediator-associated protein 2 (211 aa).

Positions 128–211 are disordered; the sequence is QQKLVGSVTN…KSKKKVKKEE (84 aa). A compositionally biased stretch (low complexity) spans 134 to 148; the sequence is SVTNSSKKSSNLTQS. Ser-173 carries the post-translational modification Phosphoserine. Residues 189–198 show a composition bias toward low complexity; sequence STSTVSGSSE. Residues 202–211 show a composition bias toward basic residues; sequence KSKKKVKKEE.

In terms of assembly, associated with the Mediator complex.

It localises to the nucleus. The sequence is that of Mediator-associated protein 2 from Arabidopsis thaliana (Mouse-ear cress).